The primary structure comprises 671 residues: Sodium, potassium, lithium and rubidium/H(+) antiporter (671 aa).

Helical transmembrane passes span 7–29, 46–66, 83–103, 110–130, 156–176, 182–202, 228–248, 276–296, 315–335, 364–384, and 389–409; these read VLVL…FIPV, GLHI…PLLF, PILL…GYTI, IPLP…VVAV, ASGL…AFSI, SFVL…FFII, FVIY…VVAG, IILF…IPDV, ILII…LFWA, GAVT…GSPF, and LIIF…SVLL.

This sequence belongs to the monovalent cation:proton antiporter 1 (CPA1) transporter (TC 2.A.36) family. Nhak (TC 2.A.36.3.2) subfamily.

It is found in the cell membrane. Its function is as follows. Transporter involved in the efflux of sodium, potassium, lithium and rubidium. This is Sodium, potassium, lithium and rubidium/H(+) antiporter (nhaK) from Bacillus pumilus (strain SAFR-032).